Reading from the N-terminus, the 706-residue chain is MSAIKKTFTYGRHQVTLETGEIARQASGAVVVNMDDTMVLVTVVAKNEVKPGQDFFPLTVDYQEKTYAAGRIPGGFLKRESRPSEGETLISRLIDRPIRPLFPEGFFNEVQIIATVMSSNPEVSADIPALIGASAALSLSGLPFDGPVGAARVGFINGEYVLNPTNAELKDSALDLVVAGTESAVLMVESEAMELPEDIMLGAVVFGHTQMQAAINAINELADEAGADAWDWAPPAEDTAMVDRLKALAEDGLQQAYNIKQKRARMAAVDEVRSKAFAELITADMDTVAANHVKDAFHRLEAGVVRNRILSGQPRIDGRDTRTVRPITIRTGVLPRAHGSALFTRGETQALVVTTLGTGRDEQTIDALEGSYSDRFMLHYNMPPYATGETGRVGSPKRREIGHGRLAKRALLAVLPSKEEFGYTMRVVSEITESNGSSSMASVCGGCLSLMDAGAPLKAHVAGIAMGLIKEGNRFAVLTDILGDEDHLGDMDFKVAGTENGVTALQMDIKITGITKEIMQAALTQAKEGRMHILGIMKASVSETHEMSAYAPRIIAMKINPEKIRDVIGKGGAVIRALTEETGTQIDIQEDGSVKIACTSMEAGELAKKRIEEITAEVEVGKVYEGPVIKLLDFGAIVNVLPGRDGLLHISQIAHERVNTIGDYLKEGQVVRVKILEADEKGRLRLSMKALLEAPAPTSGGEEHAS.

Mg(2+) contacts are provided by Asp-486 and Asp-492. Residues 552-611 (PRIIAMKINPEKIRDVIGKGGAVIRALTEETGTQIDIQEDGSVKIACTSMEAGELAKKRI) form the KH domain. Residues 621-689 (GKVYEGPVIK…EKGRLRLSMK (69 aa)) enclose the S1 motif domain.

Belongs to the polyribonucleotide nucleotidyltransferase family. Requires Mg(2+) as cofactor.

Its subcellular location is the cytoplasm. The enzyme catalyses RNA(n+1) + phosphate = RNA(n) + a ribonucleoside 5'-diphosphate. In terms of biological role, involved in mRNA degradation. Catalyzes the phosphorolysis of single-stranded polyribonucleotides processively in the 3'- to 5'-direction. The chain is Polyribonucleotide nucleotidyltransferase from Thiobacillus denitrificans (strain ATCC 25259 / T1).